A 647-amino-acid polypeptide reads, in one-letter code: LIM domain kinase 1 (647 aa).

LIM zinc-binding domains lie at C25 to D75 and C84 to C137. The region spanning L165–P258 is the PDZ domain. S210 carries the post-translational modification Phosphoserine. Position 229 is a phosphothreonine (T229). Positions H256–G319 are disordered. Over residues P266 to V277 the composition is skewed to low complexity. Composition is skewed to polar residues over residues H278–R289 and S298–S313. 4 positions are modified to phosphoserine: S298, S302, S307, and S310. At S323 the chain carries Phosphoserine; by MAPKAPK2. S337 bears the Phosphoserine mark. In terms of domain architecture, Protein kinase spans L339–L604. Residues L345 to A353 and K368 contribute to the ATP site. The active site involves D460. A Phosphothreonine; by ROCK1 modification is found at T508.

Belongs to the protein kinase superfamily. TKL Ser/Thr protein kinase family. Self-associates to form homodimers. Interacts with HSP90AA1; this interaction promotes LIMK1 dimerization and subsequent transphosphorylation. Interacts with CDKN1C. Interacts (via LIM domain) with the cytoplasmic domain of NRG1. Interacts with NISCH. Interacts with SSH1. Interacts with RLIM and RNF6. Interacts (via LIM zinc-binding domains) with FAM89B/LRAP25 (via LRR repeat). Forms a tripartite complex with CDC42BPA, CDC42BPB and FAM89B/LRAP25. In terms of processing, autophosphorylated. Phosphorylated on Thr-508 by ROCK1 and PAK1, resulting in activation. Phosphorylated by PAK4 which increases the ability of LIMK1 to phosphorylate cofilin. Phosphorylated at Ser-323 by MAPKAPK2 during activation of VEGFA-induced signaling, which results in activation of LIMK1 and promotion of actin reorganization, cell migration, and tubule formation of endothelial cells. Dephosphorylated and inactivated by SSH1. Phosphorylated by CDC42BP. Ubiquitinated. 'Lys-48'-linked polyubiquitination by RNF6 leads to proteasomal degradation through the 26S proteasome, modulating LIMK1 levels in the growth cone and its effect on axonal outgrowth. Also polyubiquitinated by RLIM. As to expression, highest expression in the nervous system, particularly in the spinal cord and the cranial nerve and dorsal root ganglia.

It is found in the cytoplasm. Its subcellular location is the nucleus. The protein localises to the cytoskeleton. It localises to the cell projection. The protein resides in the lamellipodium. It carries out the reaction L-seryl-[protein] + ATP = O-phospho-L-seryl-[protein] + ADP + H(+). It catalyses the reaction L-threonyl-[protein] + ATP = O-phospho-L-threonyl-[protein] + ADP + H(+). Serine/threonine-protein kinase that plays an essential role in the regulation of actin filament dynamics. Acts downstream of several Rho family GTPase signal transduction pathways. Activated by upstream kinases including ROCK1, PAK1 and PAK4, which phosphorylate LIMK1 on a threonine residue located in its activation loop. LIMK1 subsequently phosphorylates and inactivates the actin binding/depolymerizing factors cofilin-1/CFL1, cofilin-2/CFL2 and destrin/DSTN, thereby preventing the cleavage of filamentous actin (F-actin), and stabilizing the actin cytoskeleton. In this way LIMK1 regulates several actin-dependent biological processes including cell motility, cell cycle progression, and differentiation. Phosphorylates TPPP on serine residues, thereby promoting microtubule disassembly. Stimulates axonal outgrowth and may be involved in brain development. The polypeptide is LIM domain kinase 1 (Limk1) (Mus musculus (Mouse)).